We begin with the raw amino-acid sequence, 444 residues long: Tubulin beta-8 chain (444 aa).

Residues 1 to 4 (MREI) carry the MREI motif motif. GTP-binding residues include Q11, E69, S138, G142, T143, and G144. E69 provides a ligand contact to Mg(2+). S172 carries the post-translational modification Phosphoserine; by CDK1. Residues N204 and N226 each contribute to the GTP site. A disordered region spans residues 423–444 (QQYQDATAEEEEDEEYAEEEVA). A compositionally biased stretch (acidic residues) spans 429-444 (TAEEEEDEEYAEEEVA). Position 436 is a 5-glutamyl polyglutamate (E436).

Belongs to the tubulin family. Dimer of alpha and beta chains. A typical microtubule is a hollow water-filled tube with an outer diameter of 25 nm and an inner diameter of 15 nM. Alpha-beta heterodimers associate head-to-tail to form protofilaments running lengthwise along the microtubule wall with the beta-tubulin subunit facing the microtubule plus end conferring a structural polarity. Microtubules usually have 13 protofilaments but different protofilament numbers can be found in some organisms and specialized cells. The cofactor is Mg(2+). In terms of processing, some glutamate residues at the C-terminus are polyglycylated, resulting in polyglycine chains on the gamma-carboxyl group. Glycylation is mainly limited to tubulin incorporated into axonemes (cilia and flagella) whereas glutamylation is prevalent in neuronal cells, centrioles, axonemes, and the mitotic spindle. Both modifications can coexist on the same protein on adjacent residues, and lowering polyglycylation levels increases polyglutamylation, and reciprocally. Cilia and flagella glycylation is required for their stability and maintenance. Flagella glycylation controls sperm motility. Some glutamate residues at the C-terminus are polyglutamylated, resulting in polyglutamate chains on the gamma-carboxyl group. Polyglutamylation plays a key role in microtubule severing by spastin (SPAST). SPAST preferentially recognizes and acts on microtubules decorated with short polyglutamate tails: severing activity by SPAST increases as the number of glutamates per tubulin rises from one to eight, but decreases beyond this glutamylation threshold. Glutamylation is also involved in cilia motility. Post-translationally, phosphorylated on Ser-172 by CDK1 during the cell cycle, from metaphase to telophase, but not in interphase. This phosphorylation inhibits tubulin incorporation into microtubules.

The protein localises to the cytoplasm. The protein resides in the cytoskeleton. It localises to the spindle. Functionally, tubulin is the major constituent of microtubules, a cylinder consisting of laterally associated linear protofilaments composed of alpha- and beta-tubulin heterodimers. Microtubules grow by the addition of GTP-tubulin dimers to the microtubule end, where a stabilizing cap forms. Below the cap, tubulin dimers are in GDP-bound state, owing to GTPase activity of alpha-tubulin. Has a key role in meiotic spindle assembly and oocyte maturation. This chain is Tubulin beta-8 chain (TUBB8), found in Pan troglodytes (Chimpanzee).